Reading from the N-terminus, the 328-residue chain is Delta(3,5)-Delta(2,4)-dienoyl-CoA isomerase, mitochondrial (328 aa).

Residues 1–33 (MAAGIVASRRLRDLLTRRLTGSNYPGLSISLRL) constitute a mitochondrion transit peptide. Substrate contacts are provided by residues 116–120 (AGIDL) and Gly174. At Lys231 the chain carries N6-succinyllysine. At Ser268 the chain carries Phosphoserine. The Microbody targeting signal signature appears at 326 to 328 (SKL). N6-acetyllysine is present on Lys327.

This sequence belongs to the enoyl-CoA hydratase/isomerase family. In terms of assembly, homohexamer.

Its subcellular location is the mitochondrion. It localises to the peroxisome. It catalyses the reaction (3E,5Z)-octadienoyl-CoA = (2E,4E)-octadienoyl-CoA. The catalysed reaction is (3E,5Z,8Z,11Z,14Z)-eicosapentaenoyl-CoA = (2E,4E,8Z,11Z,14Z)-eicosapentaenoyl-CoA. It participates in lipid metabolism; fatty acid beta-oxidation. Its function is as follows. Isomerization of 3-trans,5-cis-dienoyl-CoA to 2-trans,4-trans-dienoyl-CoA. The sequence is that of Delta(3,5)-Delta(2,4)-dienoyl-CoA isomerase, mitochondrial from Homo sapiens (Human).